Consider the following 1676-residue polypeptide: Protein TIC 214 (1676 aa).

Transmembrane regions (helical) follow at residues 24–44 (KIIN…ALAL), 70–90 (LILG…YIAF), 93–113 (PYTL…GNNL), 130–150 (LEIL…TCIF), 170–190 (MVFL…VLMC), and 218–238 (FFLV…IQSL). Basic and acidic residues-rich tracts occupy residues 264 to 276 (LKKS…GKST) and 283 to 298 (SHEK…SKLE). Disordered regions lie at residues 264 to 302 (LKKS…NEDE), 546 to 610 (LVVF…SYSI), 1123 to 1151 (NKQS…NLIL), and 1372 to 1436 (QQQN…SEDD). Positions 562–586 (DSGNIQNKSSDKTINPQNNLTNSKT) are enriched in polar residues. Residues 597–610 (TTEKEPKDDKSYSI) show a composition bias toward basic and acidic residues. Over residues 1123-1138 (NKQSLQKGNSKGNSNL) the composition is skewed to polar residues. A compositionally biased stretch (low complexity) spans 1372–1390 (QQQNQTTTKINTETKNQQK). Residues 1384-1436 (ETKNQQKNRVENEENKETENQQNAETKNKQKSKTENEENKETENQQNDESEDD) are a coiled coil. Basic and acidic residues-rich tracts occupy residues 1391–1402 (NRVENEENKETE) and 1409–1426 (TKNK…KETE).

This sequence belongs to the TIC214 family. Part of the Tic complex.

It is found in the plastid. It localises to the chloroplast inner membrane. In terms of biological role, involved in protein precursor import into chloroplasts. May be part of an intermediate translocation complex acting as a protein-conducting channel at the inner envelope. In Cuscuta obtusiflora (Peruvian dodder), this protein is Protein TIC 214.